The sequence spans 198 residues: Bcl-2-like protein 11 (198 aa).

The disordered stretch occupies residues 1–72 (MAKQPSDVSS…PLAPPASPGP (72 aa)). Phosphoserine; by MAPK is present on S69. Residues S77, S87, and S94 each carry the phosphoserine modification. A BH3 motif is present at residues 148–162 (IAQELRRIGDEFNAY).

The protein belongs to the Bcl-2 family. As to quaternary structure, forms heterodimers with a number of antiapoptotic Bcl-2 proteins, including MCL1, BCL2, BCL2L1 isoform Bcl-X(L), BCL2A1/BFL-1, BHRF1, and BCL2L2/BCLW. Does not heterodimerize with proapoptotic proteins such as BAD, BOK or BAK. Identified in a complex containing BCL2L11, DYNLL1 and BCL2L1 isoform Bcl-X(L); BH3 integrity is required for BCL2L1-binding. Interacts with YWHAZ. When phosphorylated, interacts with TRIM2; this interaction is associated with ubiquitination and degradation. Interacts with MCL1; may sequester BCL2L11 to prevent its pro-apoptotic activity. Interacts with GIMAP5. Interacts with BCL2L10/BCL-B. Interacts (when phosphorylated) with USP27X; the interaction leads to BCL2L11 deubiquitination and stabilization. Interacts with humanin; the interaction prevents BIM-induced apoptosis. In terms of assembly, does not interact with humanin. As to quaternary structure, interacts with BAX; the interaction may lead to BAX activation through conformational change. Does not interact with humanin. Interacts with BAX; the interaction may lead to BAX activation through conformational change. Post-translationally, phosphorylation at Ser-69 by MAPK1/MAPK3 leads to interaction with TRIM2 and polyubiquitination, followed by proteasomal degradation. Deubiquitination catalyzed by USP27X stabilizes the protein. Ubiquitination by TRIM2 following phosphorylation by MAPK1/MAPK3 leads to proteasomal degradation. Conversely, deubiquitination catalyzed by USP27X stabilizes the protein. In terms of tissue distribution, isoform BimEL, isoform BimL and isoform BimS are the predominant isoforms and are widely expressed with tissue-specific variation. Isoform Bim-gamma is most abundantly expressed in small intestine and colon, and in lower levels in spleen, prostate, testis, heart, liver and kidney.

It localises to the endomembrane system. Its subcellular location is the mitochondrion. Induces apoptosis and anoikis. Isoform BimL is more potent than isoform BimEL. Isoform Bim-alpha1, isoform Bim-alpha2 and isoform Bim-alpha3 induce apoptosis, although less potent than isoform BimEL, isoform BimL and isoform BimS. Isoform Bim-gamma induces apoptosis. Isoform Bim-alpha3 induces apoptosis possibly through a caspase-mediated pathway. Isoform BimAC and isoform BimABC lack the ability to induce apoptosis. This chain is Bcl-2-like protein 11 (BCL2L11), found in Homo sapiens (Human).